The primary structure comprises 380 residues: E3 ubiquitin-protein ligase RNF13 (380 aa).

Positions 1–34 are cleaved as a signal peptide; the sequence is MLLSIGMLMLSATQVYTILTVQLFAFLNLLPVEA. Residues 35–182 are Lumenal-facing; sequence DILAYNFENA…VPEFSLPLEY (148 aa). Residues 65–160 form the PA domain; the sequence is KGFLINSKPE…GESSANSLKD (96 aa). An N-linked (GlcNAc...) asparagine glycan is attached at Asn-88. Residues 183 to 203 form a helical membrane-spanning segment; that stretch reads YLIPFLIIVGICLILIVIFMI. Topologically, residues 204-380 are cytoplasmic; sequence TKFVQDRHRA…ERDYNIANTV (177 aa). An RING-type; atypical zinc finger spans residues 240–282; the sequence is CAICLDEYEDGDKLRILPCSHAYHCKCVDPWLTKTKKTCPVCK. Residues 285 to 380 are disordered; sequence VVPSQGDSDS…ERDYNIANTV (96 aa). Composition is skewed to acidic residues over residues 292 to 304 and 339 to 356; these read SDSD…EENE and SDYE…AENE.

In terms of assembly, interacts with ERN1. Autoubiquitinated.

The protein localises to the endoplasmic reticulum membrane. It localises to the late endosome membrane. Its subcellular location is the lysosome membrane. It is found in the nucleus inner membrane. It carries out the reaction S-ubiquitinyl-[E2 ubiquitin-conjugating enzyme]-L-cysteine + [acceptor protein]-L-lysine = [E2 ubiquitin-conjugating enzyme]-L-cysteine + N(6)-ubiquitinyl-[acceptor protein]-L-lysine.. The protein operates within protein modification; protein ubiquitination. Its function is as follows. E3 ubiquitin-protein ligase that regulates cell proliferation. Involved in apoptosis regulation. Mediates ER stress-induced activation of JNK signaling pathway and apoptosis by promoting ERN1 activation and splicing of XBP1 mRNA. Also involved in protein trafficking and localization. This Bos taurus (Bovine) protein is E3 ubiquitin-protein ligase RNF13 (RNF13).